A 122-amino-acid polypeptide reads, in one-letter code: Small ribosomal subunit protein uS13 (122 aa).

Residues 99 to 122 (RGQRTHTNARTRKGPAKAIAGKKK) are disordered.

The protein belongs to the universal ribosomal protein uS13 family. Part of the 30S ribosomal subunit. Forms a loose heterodimer with protein S19. Forms two bridges to the 50S subunit in the 70S ribosome.

Its function is as follows. Located at the top of the head of the 30S subunit, it contacts several helices of the 16S rRNA. In the 70S ribosome it contacts the 23S rRNA (bridge B1a) and protein L5 of the 50S subunit (bridge B1b), connecting the 2 subunits; these bridges are implicated in subunit movement. Contacts the tRNAs in the A and P-sites. This chain is Small ribosomal subunit protein uS13, found in Allorhizobium ampelinum (strain ATCC BAA-846 / DSM 112012 / S4) (Agrobacterium vitis (strain S4)).